The following is a 159-amino-acid chain: NADH-quinone oxidoreductase subunit I (159 aa).

4Fe-4S ferredoxin-type domains follow at residues 51-80 (RRYE…IEAD) and 90-119 (TRYD…EGPN). [4Fe-4S] cluster contacts are provided by Cys60, Cys63, Cys66, Cys70, Cys99, Cys102, Cys105, and Cys109.

The protein belongs to the complex I 23 kDa subunit family. NDH-1 is composed of 14 different subunits. Subunits NuoA, H, J, K, L, M, N constitute the membrane sector of the complex. It depends on [4Fe-4S] cluster as a cofactor.

Its subcellular location is the cell inner membrane. The catalysed reaction is a quinone + NADH + 5 H(+)(in) = a quinol + NAD(+) + 4 H(+)(out). Functionally, NDH-1 shuttles electrons from NADH, via FMN and iron-sulfur (Fe-S) centers, to quinones in the respiratory chain. The immediate electron acceptor for the enzyme in this species is believed to be ubiquinone. Couples the redox reaction to proton translocation (for every two electrons transferred, four hydrogen ions are translocated across the cytoplasmic membrane), and thus conserves the redox energy in a proton gradient. The protein is NADH-quinone oxidoreductase subunit I of Rickettsia conorii (strain ATCC VR-613 / Malish 7).